We begin with the raw amino-acid sequence, 210 residues long: Imidazoleglycerol-phosphate dehydratase (210 aa).

The protein belongs to the imidazoleglycerol-phosphate dehydratase family.

It catalyses the reaction D-erythro-1-(imidazol-4-yl)glycerol 3-phosphate = 3-(imidazol-4-yl)-2-oxopropyl phosphate + H2O. It functions in the pathway amino-acid biosynthesis; L-histidine biosynthesis; L-histidine from 5-phospho-alpha-D-ribose 1-diphosphate: step 6/9. This chain is Imidazoleglycerol-phosphate dehydratase (HIS3), found in Candida glabrata (strain ATCC 2001 / BCRC 20586 / JCM 3761 / NBRC 0622 / NRRL Y-65 / CBS 138) (Yeast).